The following is an 870-amino-acid chain: MASKISQTPEKQPSTAYDPLSIETRWQQSWKEQGLYKTKEPTKSQKTFYALSMFPYPSGTLHMGHVRNYVITDVIARLHRMKGDSVLHPMGWDAFGLPAENAAIERGIPADIWTYKNIEDMRNQLNRLGLSIDWDKEVTTCKEEYYKWTQYIFLELYEAGLAYQKSATVNWDPIDKTVLANEQVDANGRSWRSGALVEKKKLKQWFLKITDFADELLEDIELLSGWPQNVKTMQQNWIGRSNGTEIDFYIKGKNNIFITVFTTRPDTLHGTEYLVLAPDHELINSIIDKNKITELEQFRTEISILTDQERTSDGNNKRGMFLGCHAINPINKKIIPIWVGEYVLSSYATGAVMGVPAHDKRDYKFAKKYSLPIQYVIKSPSQEASDLEASSAYVKEGIMINSGEFNGINSKEAGFMITKLGVKQGWAKNKVTYKLRDWLISRQRMWGCPIPIIYCPDCGSVPVKREELPVKLTNPSVIGKSQENKNNIPIMKCSKCNKDSILETDTMDTFMCSSWYFLRYIDVENNKLPFTKTEVDKWLPVDQYVGGIEHAILHLLYSRFLIKALRNRGLLNIKEPFSNLLTQGMVQGVTFKNPKTSKYISPDHINDINTPLDPETGEPLDVLYEKMSKSKYNGVDPASVIDKYGTDTARMFILFKAPPEKDLEWDESDVEGQYRFLNRLWRIVIYSIETKDINISNCTQEILLNDLSDKERKLIKVLNNTIKEVTNDLVNDFQFNTAISELMILCNSIYENIDDCGDYIVTETFKKLTLLLAPFAPHIAEEFWIKLKGKGSVHENSWPTYDPKALLEDSYKLIIQINGKVRGNISVNHEDSELELKNKALACETTQKWLNGIEPKRIIIVKGKIINIVF.

A 'HIGH' region motif is present at residues 55 to 65 (PYPSGTLHMGH). A 'KMSKS' region motif is present at residues 626–630 (KMSKS). Lys629 contacts ATP.

It belongs to the class-I aminoacyl-tRNA synthetase family.

It localises to the cytoplasm. It catalyses the reaction tRNA(Leu) + L-leucine + ATP = L-leucyl-tRNA(Leu) + AMP + diphosphate. This chain is Leucine--tRNA ligase, found in Prochlorococcus marinus (strain SARG / CCMP1375 / SS120).